A 227-amino-acid chain; its full sequence is MELVFIRHGFSEWNAKNLFTGWRDVNLTERGVEEAKAAGQKLLAAGYEFDIAFTSVLTRAIKTCNIVLEESNQLWIPQVKHWRLNERHYGELQGLDKKATAEKYGDEQVHIWRRSYDTLPPLLAPSDPNSAHNDRRYAHLPKEVVPNGENLKVTLERVLPFWEDQIAPALLSGKRVLVTAHGNSLRALAKHIIGISDAEIMDFEIPTGQPLVLKLDSKLNFIEKFYL.

Substrate is bound by residues 7–14, 20–21, R59, 86–89, K97, 113–114, and 182–183; these read RHGFSEWN, TG, ERHY, RR, and GN. H8 serves as the catalytic Tele-phosphohistidine intermediate. Catalysis depends on E86, which acts as the Proton donor/acceptor.

This sequence belongs to the phosphoglycerate mutase family. BPG-dependent PGAM subfamily. In terms of assembly, homodimer.

It carries out the reaction (2R)-2-phosphoglycerate = (2R)-3-phosphoglycerate. It participates in carbohydrate degradation; glycolysis; pyruvate from D-glyceraldehyde 3-phosphate: step 3/5. Functionally, catalyzes the interconversion of 2-phosphoglycerate and 3-phosphoglycerate. The protein is 2,3-bisphosphoglycerate-dependent phosphoglycerate mutase of Haemophilus ducreyi (strain 35000HP / ATCC 700724).